Here is a 120-residue protein sequence, read N- to C-terminus: Large ribosomal subunit protein uL22 (120 aa).

This sequence belongs to the universal ribosomal protein uL22 family. In terms of assembly, part of the 50S ribosomal subunit.

In terms of biological role, this protein binds specifically to 23S rRNA; its binding is stimulated by other ribosomal proteins, e.g. L4, L17, and L20. It is important during the early stages of 50S assembly. It makes multiple contacts with different domains of the 23S rRNA in the assembled 50S subunit and ribosome. Functionally, the globular domain of the protein is located near the polypeptide exit tunnel on the outside of the subunit, while an extended beta-hairpin is found that lines the wall of the exit tunnel in the center of the 70S ribosome. This chain is Large ribosomal subunit protein uL22, found in Crocosphaera subtropica (strain ATCC 51142 / BH68) (Cyanothece sp. (strain ATCC 51142)).